A 345-amino-acid polypeptide reads, in one-letter code: D-fructose 1,6-bisphosphatase class 2/sedoheptulose 1,7-bisphosphatase (345 aa).

Residues aspartate 33, glutamate 57, aspartate 97, and glutamate 100 each coordinate Mn(2+). Residues 100 to 102 (EGT), tyrosine 131, 176 to 178 (RPR), and 198 to 200 (DGD) contribute to the substrate site. Position 225 (glutamate 225) interacts with Mn(2+).

It belongs to the FBPase class 2 family. As to quaternary structure, homotetramer. It depends on Mn(2+) as a cofactor.

It carries out the reaction beta-D-fructose 1,6-bisphosphate + H2O = beta-D-fructose 6-phosphate + phosphate. It catalyses the reaction D-sedoheptulose 1,7-bisphosphate + H2O = D-sedoheptulose 7-phosphate + phosphate. Its pathway is carbohydrate biosynthesis; Calvin cycle. In terms of biological role, catalyzes the hydrolysis of fructose 1,6-bisphosphate (Fru 1,6-P2) and sedoheptulose 1,7-bisphosphate (Sed 1,7-P2) to fructose 6-phosphate and sedoheptulose 7-phosphate, respectively. This is D-fructose 1,6-bisphosphatase class 2/sedoheptulose 1,7-bisphosphatase from Synechocystis sp. (strain ATCC 27184 / PCC 6803 / Kazusa).